The sequence spans 248 residues: 23S rRNA (guanosine-2'-O-)-methyltransferase RlmB (248 aa).

Residues Gly-198, Leu-218, and Leu-227 each contribute to the S-adenosyl-L-methionine site.

The protein belongs to the class IV-like SAM-binding methyltransferase superfamily. RNA methyltransferase TrmH family. RlmB subfamily.

The protein resides in the cytoplasm. It catalyses the reaction guanosine(2251) in 23S rRNA + S-adenosyl-L-methionine = 2'-O-methylguanosine(2251) in 23S rRNA + S-adenosyl-L-homocysteine + H(+). Functionally, specifically methylates the ribose of guanosine 2251 in 23S rRNA. The protein is 23S rRNA (guanosine-2'-O-)-methyltransferase RlmB of Pseudomonas aeruginosa (strain ATCC 15692 / DSM 22644 / CIP 104116 / JCM 14847 / LMG 12228 / 1C / PRS 101 / PAO1).